Reading from the N-terminus, the 571-residue chain is Proline--tRNA ligase (571 aa).

The protein belongs to the class-II aminoacyl-tRNA synthetase family. ProS type 1 subfamily. In terms of assembly, homodimer.

Its subcellular location is the cytoplasm. The enzyme catalyses tRNA(Pro) + L-proline + ATP = L-prolyl-tRNA(Pro) + AMP + diphosphate. Its function is as follows. Catalyzes the attachment of proline to tRNA(Pro) in a two-step reaction: proline is first activated by ATP to form Pro-AMP and then transferred to the acceptor end of tRNA(Pro). As ProRS can inadvertently accommodate and process non-cognate amino acids such as alanine and cysteine, to avoid such errors it has two additional distinct editing activities against alanine. One activity is designated as 'pretransfer' editing and involves the tRNA(Pro)-independent hydrolysis of activated Ala-AMP. The other activity is designated 'posttransfer' editing and involves deacylation of mischarged Ala-tRNA(Pro). The misacylated Cys-tRNA(Pro) is not edited by ProRS. The sequence is that of Proline--tRNA ligase from Stutzerimonas stutzeri (strain A1501) (Pseudomonas stutzeri).